The sequence spans 690 residues: Polyphosphate kinase (690 aa).

Residue asparagine 45 coordinates ATP. Residues arginine 375 and arginine 405 each contribute to the Mg(2+) site. Histidine 435 functions as the Phosphohistidine intermediate in the catalytic mechanism. Positions 468, 564, and 592 each coordinate ATP.

The protein belongs to the polyphosphate kinase 1 (PPK1) family. Mg(2+) serves as cofactor. In terms of processing, an intermediate of this reaction is the autophosphorylated ppk in which a phosphate is covalently linked to a histidine residue through a N-P bond.

It carries out the reaction [phosphate](n) + ATP = [phosphate](n+1) + ADP. Functionally, catalyzes the reversible transfer of the terminal phosphate of ATP to form a long-chain polyphosphate (polyP). The sequence is that of Polyphosphate kinase from Pseudomonas aeruginosa (strain ATCC 15692 / DSM 22644 / CIP 104116 / JCM 14847 / LMG 12228 / 1C / PRS 101 / PAO1).